Reading from the N-terminus, the 906-residue chain is Protein translocase subunit SecA (906 aa).

Residues Q86, 104-108 (GEGKT), and D499 contribute to the ATP site. Positions 865–885 (VSRIDPKDRNPEDPTSWGRVS) are disordered. Positions 890, 892, 901, and 902 each coordinate Zn(2+).

This sequence belongs to the SecA family. As to quaternary structure, monomer and homodimer. Part of the essential Sec protein translocation apparatus which comprises SecA, SecYEG and auxiliary proteins SecDF-YajC and YidC. Requires Zn(2+) as cofactor.

The protein resides in the cell inner membrane. It is found in the cytoplasm. The catalysed reaction is ATP + H2O + cellular proteinSide 1 = ADP + phosphate + cellular proteinSide 2.. Part of the Sec protein translocase complex. Interacts with the SecYEG preprotein conducting channel. Has a central role in coupling the hydrolysis of ATP to the transfer of proteins into and across the cell membrane, serving both as a receptor for the preprotein-SecB complex and as an ATP-driven molecular motor driving the stepwise translocation of polypeptide chains across the membrane. In Rickettsia canadensis (strain McKiel), this protein is Protein translocase subunit SecA.